The sequence spans 120 residues: UPF0102 protein PST_1070 (120 aa).

This sequence belongs to the UPF0102 family.

The sequence is that of UPF0102 protein PST_1070 from Stutzerimonas stutzeri (strain A1501) (Pseudomonas stutzeri).